Consider the following 472-residue polypeptide: Gamma-aminobutyric acid receptor subunit beta-2 (472 aa).

The first 23 residues, 1–23, serve as a signal peptide directing secretion; that stretch reads RVRKKDYFGIWSFPLIIAAVCAQ. Over 24 to 239 the chain is Extracellular; that stretch reads SVNDPSNMSL…LSLSFKLKRN (216 aa). Residues asparagine 30 and asparagine 102 are each glycosylated (N-linked (GlcNAc...) asparagine). Tyrosine 119 contacts histamine. An intrachain disulfide couples cysteine 158 to cysteine 172. Histamine-binding positions include 178 to 179 and threonine 224; that span reads SY. 4-aminobutanoate-binding residues include tyrosine 179 and threonine 224. The next 3 membrane-spanning stretches (helical) occupy residues 240-260, 271-290, and 309-329; these read IGYFILQTYMPSILITILSWV, ARVALGITTVLTMTTINTHL, and GCFVFVFMALLEYALVNYIFF. An etomidate binding; allosteric effector region spans residues 287–308; it reads NTHLRETLPKIPYVKAIDMYLM. Residues 330-450 lie on the Cytoplasmic side of the membrane; that stretch reads GRGPQRQKKA…LTDVNAIDRW (121 aa). Tyrosine 401 carries the phosphotyrosine modification. A helical membrane pass occupies residues 451-471; that stretch reads SRIFFPVVFSFFNIVYWLYYV.

This sequence belongs to the ligand-gated ion channel (TC 1.A.9) family. Gamma-aminobutyric acid receptor (TC 1.A.9.5) subfamily. GABRB2 sub-subfamily. In terms of assembly, heteropentamer, formed by a combination of alpha (GABRA1-6), beta (GABRB1-3), gamma (GABRG1-3), delta (GABRD), epsilon (GABRE), rho (GABRR1-3), pi (GABRP) and theta (GABRQ) chains, each subunit exhibiting distinct physiological and pharmacological properties. Interacts with UBQLN1. May interact with KIF21B. Identified in a complex of 720 kDa composed of LHFPL4, NLGN2, GABRA1, GABRB2, GABRG2 and GABRB3. In terms of processing, glycosylated.

The protein localises to the postsynaptic cell membrane. It is found in the cell membrane. The protein resides in the cytoplasmic vesicle membrane. It catalyses the reaction chloride(in) = chloride(out). Its activity is regulated as follows. Allosterically activated by benzodiazepines. Allosterically activated by the anesthetic etomidate. Inhibited by the antagonist bicuculline. Potentiated by histamine. Beta subunit of the heteropentameric ligand-gated chloride channel gated by gamma-aminobutyric acid (GABA), a major inhibitory neurotransmitter in the brain. GABA-gated chloride channels, also named GABA(A) receptors (GABAAR), consist of five subunits arranged around a central pore and contain GABA active binding site(s) located at the alpha and beta subunit interface(s). When activated by GABA, GABAARs selectively allow the flow of chloride anions across the cell membrane down their electrochemical gradient. Chloride influx into the postsynaptic neuron following GABAAR opening decreases the neuron ability to generate a new action potential, thereby reducing nerve transmission. GABAARs containing alpha-1 and beta-2 or -3 subunits exhibit synaptogenic activity; the gamma-2 subunit being necessary but not sufficient to induce rapid synaptic contacts formation. Extrasynaptic beta-2 receptors contribute to the tonic GABAergic inhibition. Beta-containing GABAARs can simultaneously bind GABA and histamine where histamine binds at the interface of two neighboring beta subunits, which may be involved in the regulation of sleep and wakefulness. The protein is Gamma-aminobutyric acid receptor subunit beta-2 (GABRB2) of Bos taurus (Bovine).